Consider the following 487-residue polypeptide: Probable glycine dehydrogenase (decarboxylating) subunit 2 (487 aa).

An N6-(pyridoxal phosphate)lysine modification is found at K269.

Belongs to the GcvP family. C-terminal subunit subfamily. In terms of assembly, the glycine cleavage system is composed of four proteins: P, T, L and H. In this organism, the P 'protein' is a heterodimer of two subunits. Pyridoxal 5'-phosphate serves as cofactor.

The catalysed reaction is N(6)-[(R)-lipoyl]-L-lysyl-[glycine-cleavage complex H protein] + glycine + H(+) = N(6)-[(R)-S(8)-aminomethyldihydrolipoyl]-L-lysyl-[glycine-cleavage complex H protein] + CO2. The glycine cleavage system catalyzes the degradation of glycine. The P protein binds the alpha-amino group of glycine through its pyridoxal phosphate cofactor; CO(2) is released and the remaining methylamine moiety is then transferred to the lipoamide cofactor of the H protein. In Prosthecochloris aestuarii (strain DSM 271 / SK 413), this protein is Probable glycine dehydrogenase (decarboxylating) subunit 2.